We begin with the raw amino-acid sequence, 188 residues long: HTH-type transcriptional regulator Mb3439c (188 aa).

Residues 17–77 (EEVAAAILQA…AVLDHLGTKL (61 aa)) form the HTH tetR-type domain. A DNA-binding region (H-T-H motif) is located at residues 40–59 (SIRDIAARSKVNHGLVFRHF).

Negatively regulates the expression of sulfate ester dioxygenase Mb3440 and its own expression. The chain is HTH-type transcriptional regulator Mb3439c from Mycobacterium bovis (strain ATCC BAA-935 / AF2122/97).